The chain runs to 191 residues: dCTP deaminase (191 aa).

Residues 112–117, 136–138, Gln157, Tyr173, and Gln183 contribute to the dCTP site; these read KSTYAR and TLE. Glu138 (proton donor/acceptor) is an active-site residue.

This sequence belongs to the dCTP deaminase family. Homotrimer.

It carries out the reaction dCTP + H2O + H(+) = dUTP + NH4(+). It participates in pyrimidine metabolism; dUMP biosynthesis; dUMP from dCTP (dUTP route): step 1/2. Functionally, catalyzes the deamination of dCTP to dUTP. In Psychrobacter arcticus (strain DSM 17307 / VKM B-2377 / 273-4), this protein is dCTP deaminase.